The following is a 210-amino-acid chain: tRNA (guanine-N(7)-)-methyltransferase (210 aa).

Residues Glu-43, Glu-68, Asp-95, and Asp-117 each contribute to the S-adenosyl-L-methionine site. Asp-117 is an active-site residue. Substrate-binding positions include Lys-121, Asp-153, and 190-193; that span reads TEYE.

The protein belongs to the class I-like SAM-binding methyltransferase superfamily. TrmB family.

It carries out the reaction guanosine(46) in tRNA + S-adenosyl-L-methionine = N(7)-methylguanosine(46) in tRNA + S-adenosyl-L-homocysteine. It functions in the pathway tRNA modification; N(7)-methylguanine-tRNA biosynthesis. Catalyzes the formation of N(7)-methylguanine at position 46 (m7G46) in tRNA. This is tRNA (guanine-N(7)-)-methyltransferase from Macrococcus caseolyticus (strain JCSC5402) (Macrococcoides caseolyticum).